An 88-amino-acid polypeptide reads, in one-letter code: RNA-binding protein Hfq (88 aa).

In terms of domain architecture, Sm spans 10–70; that stretch reads DRFLNILRTK…ISTILPAEYI (61 aa).

The protein belongs to the Hfq family. In terms of assembly, homohexamer.

Functionally, RNA chaperone that binds small regulatory RNA (sRNAs) and mRNAs to facilitate mRNA translational regulation in response to envelope stress, environmental stress and changes in metabolite concentrations. Also binds with high specificity to tRNAs. The polypeptide is RNA-binding protein Hfq (Fervidobacterium nodosum (strain ATCC 35602 / DSM 5306 / Rt17-B1)).